Here is a 377-residue protein sequence, read N- to C-terminus: Transcription factor EC (377 aa).

The bHLH domain maps to 169-222; sequence QKKDNHNLIERRRRYNINYRIKELGTLIPKSNDPDMRWNKGTILKASVEYIKWL. Residues 349-377 are disordered; the sequence is DPLLSSTSPAASKESSRRSSFSTDDGDDL. The segment covering 353 to 370 has biased composition (low complexity); that stretch reads SSTSPAASKESSRRSSFS.

It belongs to the MiT/TFE family.

Its subcellular location is the nucleus. Transcriptional regulator that acts as a repressor or an activator. Binds DNA. The protein is Transcription factor EC (TFEC) of Gallus gallus (Chicken).